The primary structure comprises 365 residues: Isopentenyl-diphosphate delta-isomerase (365 aa).

8 to 9 provides a ligand contact to substrate; sequence RK. FMN-binding positions include 67–69, S97, and N126; that span reads SIT. Residue 97-99 participates in substrate binding; the sequence is SQR. Q160 contacts substrate. E161 is a binding site for Mg(2+). Residues K192, T222, 272–274, and 293–294 each bind FMN; these read GIR and AL.

It belongs to the IPP isomerase type 2 family. Homooctamer. Dimer of tetramers. FMN serves as cofactor. It depends on NADPH as a cofactor. Requires Mg(2+) as cofactor.

Its subcellular location is the cytoplasm. The enzyme catalyses isopentenyl diphosphate = dimethylallyl diphosphate. Its function is as follows. Involved in the biosynthesis of isoprenoids. Catalyzes the 1,3-allylic rearrangement of the homoallylic substrate isopentenyl (IPP) to its allylic isomer, dimethylallyl diphosphate (DMAPP). The polypeptide is Isopentenyl-diphosphate delta-isomerase (Methanosarcina barkeri (strain Fusaro / DSM 804)).